The following is a 122-amino-acid chain: MIQVESTLQVADNSGAKKVACIKVLGGSHRRYASVGDIVVVSVKEAIPHSKVKKGDVMKAVIVRTAKEVRRMDGSYIKFDGNAAVLLSTQGEPIGTRIFGPVARELRAMNFMKIISLAPEVL.

This sequence belongs to the universal ribosomal protein uL14 family. In terms of assembly, part of the 50S ribosomal subunit. Forms a cluster with proteins L3 and L19. In the 70S ribosome, L14 and L19 interact and together make contacts with the 16S rRNA in bridges B5 and B8.

Functionally, binds to 23S rRNA. Forms part of two intersubunit bridges in the 70S ribosome. In Desulfovibrio desulfuricans (strain ATCC 27774 / DSM 6949 / MB), this protein is Large ribosomal subunit protein uL14.